The chain runs to 477 residues: Glycogen synthase (477 aa).

K15 lines the ADP-alpha-D-glucose pocket.

Belongs to the glycosyltransferase 1 family. Bacterial/plant glycogen synthase subfamily.

The catalysed reaction is [(1-&gt;4)-alpha-D-glucosyl](n) + ADP-alpha-D-glucose = [(1-&gt;4)-alpha-D-glucosyl](n+1) + ADP + H(+). Its pathway is glycan biosynthesis; glycogen biosynthesis. Synthesizes alpha-1,4-glucan chains using ADP-glucose. In Edwardsiella ictaluri (strain 93-146), this protein is Glycogen synthase.